Reading from the N-terminus, the 336-residue chain is HTH-type transcriptional repressor PurR (336 aa).

The 55-residue stretch at alanine 2–valine 56 folds into the HTH lacI-type domain. The segment at residues isoleucine 4–asparagine 23 is a DNA-binding region (H-T-H motif). The DNA-binding element occupies serine 48–valine 56. Residues tyrosine 73, lysine 188, phenylalanine 219, and aspartate 273 each coordinate hypoxanthine.

Homodimer.

The protein operates within purine metabolism; purine nucleotide biosynthesis [regulation]. Its function is as follows. Is the main repressor of the genes involved in the de novo synthesis of purine nucleotides, regulating purB, purC, purEK, purF, purHD, purL, purMN and guaBA expression. PurR is allosterically activated to bind its cognate DNA by binding the purine corepressors, hypoxanthine or guanine, thereby effecting transcription repression. The sequence is that of HTH-type transcriptional repressor PurR from Actinobacillus pleuropneumoniae serotype 5b (strain L20).